The primary structure comprises 215 residues: 3-isopropylmalate dehydratase small subunit (215 aa).

It belongs to the LeuD family. LeuD type 1 subfamily. As to quaternary structure, heterodimer of LeuC and LeuD.

It carries out the reaction (2R,3S)-3-isopropylmalate = (2S)-2-isopropylmalate. The protein operates within amino-acid biosynthesis; L-leucine biosynthesis; L-leucine from 3-methyl-2-oxobutanoate: step 2/4. Its function is as follows. Catalyzes the isomerization between 2-isopropylmalate and 3-isopropylmalate, via the formation of 2-isopropylmaleate. The sequence is that of 3-isopropylmalate dehydratase small subunit from Hahella chejuensis (strain KCTC 2396).